Here is a 388-residue protein sequence, read N- to C-terminus: Succinate--CoA ligase [ADP-forming] subunit beta (388 aa).

The 236-residue stretch at K9 to H244 folds into the ATP-grasp domain. ATP is bound by residues K46, G53–G55, E99, T102, and E107. 2 residues coordinate Mg(2+): N199 and D213. Substrate-binding positions include N264 and G321–V323.

Belongs to the succinate/malate CoA ligase beta subunit family. In terms of assembly, heterotetramer of two alpha and two beta subunits. Mg(2+) is required as a cofactor.

The catalysed reaction is succinate + ATP + CoA = succinyl-CoA + ADP + phosphate. It carries out the reaction GTP + succinate + CoA = succinyl-CoA + GDP + phosphate. It participates in carbohydrate metabolism; tricarboxylic acid cycle; succinate from succinyl-CoA (ligase route): step 1/1. Its function is as follows. Succinyl-CoA synthetase functions in the citric acid cycle (TCA), coupling the hydrolysis of succinyl-CoA to the synthesis of either ATP or GTP and thus represents the only step of substrate-level phosphorylation in the TCA. The beta subunit provides nucleotide specificity of the enzyme and binds the substrate succinate, while the binding sites for coenzyme A and phosphate are found in the alpha subunit. This Pectobacterium atrosepticum (strain SCRI 1043 / ATCC BAA-672) (Erwinia carotovora subsp. atroseptica) protein is Succinate--CoA ligase [ADP-forming] subunit beta.